Consider the following 745-residue polypeptide: 5-methyltetrahydropteroyltriglutamate--homocysteine methyltransferase (745 aa).

Lysine 19 and asparagine 115 together coordinate 5-methyltetrahydropteroyltri-L-glutamate. Residues 420–422 (IGS) and glutamate 473 contribute to the L-homocysteine site. L-methionine is bound by residues 420-422 (IGS) and glutamate 473. 5-methyltetrahydropteroyltri-L-glutamate contacts are provided by residues aspartate 478, tyrosine 501, 504-505 (RA), and tryptophan 550. Position 588 (aspartate 588) interacts with L-homocysteine. Aspartate 588 contributes to the L-methionine binding site. 3 residues coordinate Zn(2+): histidine 630, cysteine 632, and glutamate 654. The active-site Proton donor is histidine 683. Residue cysteine 715 coordinates Zn(2+).

Belongs to the vitamin-B12 independent methionine synthase family. Zn(2+) serves as cofactor.

It carries out the reaction 5-methyltetrahydropteroyltri-L-glutamate + L-homocysteine = tetrahydropteroyltri-L-glutamate + L-methionine. It functions in the pathway amino-acid biosynthesis; L-methionine biosynthesis via de novo pathway; L-methionine from L-homocysteine (MetE route): step 1/1. In terms of biological role, catalyzes the transfer of a methyl group from 5-methyltetrahydrofolate to homocysteine resulting in methionine formation. In Streptococcus mutans serotype c (strain ATCC 700610 / UA159), this protein is 5-methyltetrahydropteroyltriglutamate--homocysteine methyltransferase.